The chain runs to 493 residues: Glutamyl-tRNA(Gln) amidotransferase subunit A (493 aa).

Active-site charge relay system residues include K78 and S158. The active-site Acyl-ester intermediate is S182.

The protein belongs to the amidase family. GatA subfamily. Heterotrimer of A, B and C subunits.

The enzyme catalyses L-glutamyl-tRNA(Gln) + L-glutamine + ATP + H2O = L-glutaminyl-tRNA(Gln) + L-glutamate + ADP + phosphate + H(+). In terms of biological role, allows the formation of correctly charged Gln-tRNA(Gln) through the transamidation of misacylated Glu-tRNA(Gln) in organisms which lack glutaminyl-tRNA synthetase. The reaction takes place in the presence of glutamine and ATP through an activated gamma-phospho-Glu-tRNA(Gln). This chain is Glutamyl-tRNA(Gln) amidotransferase subunit A, found in Rickettsia rickettsii (strain Iowa).